A 111-amino-acid chain; its full sequence is Large ribosomal subunit protein uL23 (111 aa).

This sequence belongs to the universal ribosomal protein uL23 family. In terms of assembly, part of the 50S ribosomal subunit. Contacts protein L29, and trigger factor when it is bound to the ribosome.

Its function is as follows. One of the early assembly proteins it binds 23S rRNA. One of the proteins that surrounds the polypeptide exit tunnel on the outside of the ribosome. Forms the main docking site for trigger factor binding to the ribosome. In Nitrosomonas eutropha (strain DSM 101675 / C91 / Nm57), this protein is Large ribosomal subunit protein uL23.